Reading from the N-terminus, the 666-residue chain is MSREVTSGLPQDKPTGSAPPPPPPWRRWLLPIGLLVSLVLLFTFPMRPSSGKTLTYSEFLTALHHHDIKTITIHSDGEASGQFADGRPYSTTIPIGLAGSQLLNELENNGVQISARPPGPSLASQVLAGVLSFLPFLLLLGLFAYSGRRAGAGFLAGLPGIGRARAKIFTTERPQTRFSDVAGYDGVKAEIAEVVDFLRSPERYRRAGAAIPRGVLMVGPPGTGKTLMARAVAGEAGVPFLSVTGSSFVEMFVGVGASRVRDLFEEARKHAPCIVFVDEIDAIGQRRAGAGTIVANDEREQTLNQLLAEMDGFEPAQGVVVLAATNRPEVLDPALLRPGRFDRQVTVPLPSQADRAAILRVHCRNKRLAPDVDLDAVARATPGFSGAELANLVNEAAIAAARAGRRDLTAEDFRYARDRIILGRREDSNVLLPSERHAVAVHEAGHAVVAACSENADPVERVTILPAGRALGVTFQLPLAERHLYSESYLRDSLAVRLGGRAAELEILGEASTGAVNDLSSATELALRMVREYGLSPRLGPVSYPVGGSMYLPGGQELTPRPYAEATQQRIDQEVADLLRDAEERARDIIRRNRQAVDELASLLLEQESVDGAVVYQLVGRPVPTPEEHREAAARHVRRPGIAAATGASMAGGSEPRTAASSDDLL.

A disordered region spans residues 1-23; the sequence is MSREVTSGLPQDKPTGSAPPPPP. Residues 1–27 are Cytoplasmic-facing; that stretch reads MSREVTSGLPQDKPTGSAPPPPPPWRR. The helical transmembrane segment at 28-48 threads the bilayer; it reads WLLPIGLLVSLVLLFTFPMRP. Over 49 to 125 the chain is Extracellular; that stretch reads SSGKTLTYSE…RPPGPSLASQ (77 aa). The chain crosses the membrane as a helical span at residues 126–146; it reads VLAGVLSFLPFLLLLGLFAYS. Residues 147 to 666 lie on the Cytoplasmic side of the membrane; sequence GRRAGAGFLA…RTAASSDDLL (520 aa). An ATP-binding site is contributed by 219–226; it reads GPPGTGKT. Position 442 (His442) interacts with Zn(2+). The active site involves Glu443. Positions 446 and 518 each coordinate Zn(2+). The interval 626–666 is disordered; the sequence is PEEHREAAARHVRRPGIAAATGASMAGGSEPRTAASSDDLL. A compositionally biased stretch (low complexity) spans 641-653; that stretch reads GIAAATGASMAGG.

This sequence in the central section; belongs to the AAA ATPase family. It in the C-terminal section; belongs to the peptidase M41 family. Homohexamer. Zn(2+) is required as a cofactor.

The protein resides in the cell membrane. In terms of biological role, acts as a processive, ATP-dependent zinc metallopeptidase for both cytoplasmic and membrane proteins. Plays a role in the quality control of integral membrane proteins. This Acidothermus cellulolyticus (strain ATCC 43068 / DSM 8971 / 11B) protein is ATP-dependent zinc metalloprotease FtsH.